We begin with the raw amino-acid sequence, 109 residues long: Guanylate cyclase activator 2B (109 aa).

Positions methionine 1 to serine 23 are cleaved as a signal peptide. The propeptide occupies valine 24–serine 94. 3 disulfides stabilise this stretch: cysteine 65-cysteine 78, cysteine 98-cysteine 106, and cysteine 101-cysteine 109.

This sequence belongs to the guanylin family. As to expression, small and large intestine and atria and ventricles of heart. Both uroguanylin and prouroguanylin are found in plasma.

Its subcellular location is the secreted. Endogenous activator of intestinal guanylate cyclase. It stimulates this enzyme through the same receptor binding region as the heat-stable enterotoxins. May be a potent physiological regulator of intestinal fluid and electrolyte transport. May be an autocrine/paracrine regulator of intestinal salt and water transport. This is Guanylate cyclase activator 2B (GUCA2B) from Didelphis virginiana (North American opossum).